A 598-amino-acid polypeptide reads, in one-letter code: Nuclear receptor subfamily 4 group A member 2 (598 aa).

Residues 1 to 22 (MPCVQAQYGSSPQGASPASQGY) form a disordered region. Positions 7 to 18 (QYGSSPQGASPA) are enriched in polar residues. Residues 260–335 (EGLCAVCGDN…VGMVKEVVRT (76 aa)) constitute a DNA-binding region (nuclear receptor). NR C4-type zinc fingers lie at residues 263 to 283 (CAVC…CEGC) and 299 to 318 (CLAN…CQYC). The short motif at 287 to 314 (FKRTVQKNAKYVCLANKNCPVDKRRRNR) is the Bipartite nuclear localization signal (NLS1) element. Positions 337–361 (SLKGRRGRLPSKPKSPQEPSPPSPP) are disordered. Positions 338-350 (LKGRRGRLPSKPK) match the Nuclear localization signal (NLS1) motif. Residues 352–361 (PQEPSPPSPP) show a composition bias toward pro residues. One can recognise an NR LBD domain in the interval 360–595 (PPVSLISALV…AIIDKLFLDT (236 aa)). Residues 443 to 452 (FLELFVLRLA) carry the nuclear export sequence (NES1) motif. The nuclear export sequence (NES2) signature appears at 568-577 (QGLQRIFYLK).

This sequence belongs to the nuclear hormone receptor family. Interacts with SFPQ, NCOR2, SIN3A and HADC1. The interaction with NCOR2 increases in the absence of PITX3. Interacts with PER2.

The protein localises to the cytoplasm. The protein resides in the nucleus. In terms of biological role, transcriptional regulator which is important for the differentiation and maintenance of meso-diencephalic dopaminergic (mdDA) neurons during development. It is crucial for expression of a set of genes such as SLC6A3, SLC18A2, TH and DRD2 which are essential for development of mdDA neurons. The sequence is that of Nuclear receptor subfamily 4 group A member 2 (NR4A2) from Pongo abelii (Sumatran orangutan).